The sequence spans 555 residues: Probable terpene synthase 6 (555 aa).

Mg(2+) is bound by residues Asp-309, Asp-313, and Glu-460. Positions 309–313 (DDTYD) match the DDXXD motif motif.

This sequence belongs to the terpene synthase family. Mg(2+) is required as a cofactor.

Probable sesquiterpene synthase. This Ricinus communis (Castor bean) protein is Probable terpene synthase 6 (TPS6).